A 243-amino-acid chain; its full sequence is Ribonuclease PH (243 aa).

Residues R84 and 122–124 (GTR) contribute to the phosphate site.

The protein belongs to the RNase PH family. Homohexameric ring arranged as a trimer of dimers.

The catalysed reaction is tRNA(n+1) + phosphate = tRNA(n) + a ribonucleoside 5'-diphosphate. Phosphorolytic 3'-5' exoribonuclease that plays an important role in tRNA 3'-end maturation. Removes nucleotide residues following the 3'-CCA terminus of tRNAs; can also add nucleotides to the ends of RNA molecules by using nucleoside diphosphates as substrates, but this may not be physiologically important. Probably plays a role in initiation of 16S rRNA degradation (leading to ribosome degradation) during starvation. The sequence is that of Ribonuclease PH from Bdellovibrio bacteriovorus (strain ATCC 15356 / DSM 50701 / NCIMB 9529 / HD100).